Consider the following 398-residue polypeptide: 1-deoxy-D-xylulose 5-phosphate reductoisomerase (398 aa).

Residues T11, G12, S13, I14, and N125 each contribute to the NADPH site. K126 is a 1-deoxy-D-xylulose 5-phosphate binding site. E127 contributes to the NADPH binding site. D151 is a binding site for Mn(2+). Residues S152, E153, S186, and H209 each contribute to the 1-deoxy-D-xylulose 5-phosphate site. Residue E153 participates in Mn(2+) binding. G215 is an NADPH binding site. 1-deoxy-D-xylulose 5-phosphate contacts are provided by S222, N227, K228, and E231. E231 is a binding site for Mn(2+).

Belongs to the DXR family. Mg(2+) serves as cofactor. Mn(2+) is required as a cofactor.

It carries out the reaction 2-C-methyl-D-erythritol 4-phosphate + NADP(+) = 1-deoxy-D-xylulose 5-phosphate + NADPH + H(+). The protein operates within isoprenoid biosynthesis; isopentenyl diphosphate biosynthesis via DXP pathway; isopentenyl diphosphate from 1-deoxy-D-xylulose 5-phosphate: step 1/6. Functionally, catalyzes the NADPH-dependent rearrangement and reduction of 1-deoxy-D-xylulose-5-phosphate (DXP) to 2-C-methyl-D-erythritol 4-phosphate (MEP). The protein is 1-deoxy-D-xylulose 5-phosphate reductoisomerase of Acinetobacter baumannii (strain ATCC 17978 / DSM 105126 / CIP 53.77 / LMG 1025 / NCDC KC755 / 5377).